Reading from the N-terminus, the 1506-residue chain is MALQDLGENLQPWCPLGLSLEWVKTVWDLDFTEIEPLDPSIVGEILETGRDAFTKLYGSLFPFATDESGSLESIWTFFTENDISSNTLVALFCHFVQEAHKKSASAQYREYGLHAAGLYFLLLEIPGIVVNQVFHPVMFDKCIQILKRSWPQESNLTQKRKKDHSKSSKDNYRKSRKRGKPPRKEDYQVDELSREEEEEEEEIYFSGRDLCQIRDAIFNLLKNFLRLLPKFSLKEKPQSIQTCIEVFVALTSFEPIPHKFLISQARNLNEVKHISELAYYGLYLLCSPVHGEENKVIGSIFHQMLNVILMLEVGEGSRCAPLAITSQVINCRNQAVQFVSSLVDELQASVYPVLGTLLQHICAKVVDKAEYRTYAAQSLVQLLTKLPSEEYATFIAWLYKYSRSSKIPHRVFTLDVALALLTLPERELDDTVSLEHQKFLKHKFFVQEIIFDRCLDKAPTVRSKALSSFAHCLELSSSNTSESILEIFINSNLVPGIQNLSNTVLNPSPVLTSRNGYSAQSRTHNNDEQTLPGERCFMTMLRKRIKDEKINVRKSALQVLMSILKHCDILSMEQDLLILQDHCRDPAISVRKQALQSLTELVMAQPTCVPVQKAWLMGVIPVVMDCESTVQEKALECLDQLLLQNIKHHKKFHSADRSQVLAWSLLALLTIENQDLRRYLNKAFHIWSKKDKFSSTFINSVISHTDTERSAPAWMLLSKITCSSPKLDYTKIIESWERLSREQSPNSNTLGYMLCVIGHIAKHLPKGTRDKITGVIKAKLNGFQWSPELISSSVDALQKLCRASAKTVLEEQGLLKQVCGDVLATCEQHLSNILLKEDGTGNMDEGLVVKCIFTLGDIAQLCPAIVEKRVFLLIQSILASSAHSDHLPSSQGTTDALDSQPPFQPRSSAMPSVIRAHAIITLGKLCLQHEDLAKKSIPALVRELEVSEDVAVRNNVIIVICDLCIRYTVMVDNYIPNISVCLKDSDPFIRKQTLVLLTNLLQEEYVKWKGSLFFRFVSTLVDSHPDIASLGEFCLAHLLLKRNPTMFFQHFIECIFHFNSYEKHGQYNKFSQSERGKQLFLLKGKTNKEKRMRIYKFLLEHFTDEQRFNVTSKICLNILACFTDGILPMDMEASELLSDTFDILNSKEIKLLAMRAQTSKDLLEEDDVALANVVMQEAQMKIISQVQKRNFIENIIPIIISLKTVLEKNKIPALRELMNYLREVMQDYRDEINDFFAVDKQLASELEYDMKKYNEQLAQEQALTEHANATKGPEDSDRVPSAQVAPDLEAVPALAAAPMAAAAAAAPMAAAAAAAGQDNADVPPTQSRPSAPRSNFTPTLPPISENGPLKIMSSTRPMSLSTIAILNSVKKAVASKNRTRSLGALPFNVETGSPENPSSHESSLSLEKESDRTVNHVTKRAISTPENSISDVTFAAGVSYIGTPATFFTKEKHEAQEQGSDILCLSLLDKRPPQSPQWNVKSPARSHGSTRSSRRSLRKAPLKTAN.

Positions 154 to 194 are disordered; the sequence is SNLTQKRKKDHSKSSKDNYRKSRKRGKPPRKEDYQVDELSR. HEAT repeat units follow at residues 442–476, 532–567, and 574–605; these read HKFF…LELS, PGER…LKHC, and QDLL…VMAQ. The residue at position 562 (S562) is a Phosphoserine. Polar residues predominate over residues 884-897; sequence SDHLPSSQGTTDAL. The disordered stretch occupies residues 884 to 908; it reads SDHLPSSQGTTDALDSQPPFQPRSS. The HEAT 4 repeat unit spans residues 968-1004; sequence TVMVDNYIPNISVCLKDSDPFIRKQTLVLLTNLLQEE. Positions 1213-1270 form a coiled coil; that stretch reads ALRELMNYLREVMQDYRDEINDFFAVDKQLASELEYDMKKYNEQLAQEQALTEHANAT. The disordered stretch occupies residues 1317-1353; sequence QDNADVPPTQSRPSAPRSNFTPTLPPISENGPLKIMS. Over residues 1324-1338 the composition is skewed to polar residues; that stretch reads PTQSRPSAPRSNFTP. A phosphoserine mark is found at S1359, S1368, S1381, and S1393. 2 disordered regions span residues 1385-1412 and 1473-1506; these read LPFN…ESDR and PQSP…KTAN. A compositionally biased stretch (low complexity) spans 1393–1405; that stretch reads SPENPSSHESSLS. The span at 1492-1506 shows a compositional bias: basic residues; that stretch reads SSRRSLRKAPLKTAN.

As to quaternary structure, component of the condensin-2 complex, which contains the SMC2 and SMC4 heterodimer, and 3 non SMC subunits that probably regulate the complex: NCAPH2, NCAPD3 and NCAPG2.

It localises to the nucleus. In terms of biological role, regulatory subunit of the condensin-2 complex, a complex which establishes mitotic chromosome architecture and is involved in physical rigidity of the chromatid axis. May promote the resolution of double-strand DNA catenanes (intertwines) between sister chromatids. Condensin-mediated compaction likely increases tension in catenated sister chromatids, providing directionality for type II topoisomerase-mediated strand exchanges toward chromatid decatenation. Specifically required for decatenation of centromeric ultrafine DNA bridges during anaphase. Early in neurogenesis, may play an essential role to ensure accurate mitotic chromosome condensation in neuron stem cells, ultimately affecting neuron pool and cortex size. The protein is Condensin-2 complex subunit D3 (Ncapd3) of Mus musculus (Mouse).